A 209-amino-acid polypeptide reads, in one-letter code: Imidazole glycerol phosphate synthase subunit HisH (209 aa).

Positions 1–205 constitute a Glutamine amidotransferase type-1 domain; it reads MIAIIDYGMG…QGVVEAWKSS (205 aa). Catalysis depends on Cys79, which acts as the Nucleophile. Catalysis depends on residues His180 and Glu182.

As to quaternary structure, heterodimer of HisH and HisF.

Its subcellular location is the cytoplasm. The catalysed reaction is 5-[(5-phospho-1-deoxy-D-ribulos-1-ylimino)methylamino]-1-(5-phospho-beta-D-ribosyl)imidazole-4-carboxamide + L-glutamine = D-erythro-1-(imidazol-4-yl)glycerol 3-phosphate + 5-amino-1-(5-phospho-beta-D-ribosyl)imidazole-4-carboxamide + L-glutamate + H(+). It carries out the reaction L-glutamine + H2O = L-glutamate + NH4(+). The protein operates within amino-acid biosynthesis; L-histidine biosynthesis; L-histidine from 5-phospho-alpha-D-ribose 1-diphosphate: step 5/9. In terms of biological role, IGPS catalyzes the conversion of PRFAR and glutamine to IGP, AICAR and glutamate. The HisH subunit catalyzes the hydrolysis of glutamine to glutamate and ammonia as part of the synthesis of IGP and AICAR. The resulting ammonia molecule is channeled to the active site of HisF. The chain is Imidazole glycerol phosphate synthase subunit HisH from Bacillus cereus (strain G9842).